We begin with the raw amino-acid sequence, 541 residues long: Cytosolic phospholipase A2 gamma (541 aa).

Residues 1–541 (MGSSEVSIIP…KDSARSCCLA (541 aa)) form the PLA2c domain. S82 acts as the Nucleophile in catalysis. Positions 260-292 (LTLKGLWRRAVANAKSIGHLIFARLLRLQESSQ) are required for lipid droplet localization. S337 carries the post-translational modification Phosphoserine. Residue D385 is the Proton acceptor of the active site. Residue C538 is modified to Cysteine methyl ester. The S-farnesyl cysteine moiety is linked to residue C538. A propeptide spans 539 to 541 (CLA) (removed in mature form).

(Microbial infection) Interacts with HCV non-structural protein 4B/NS4B; this interaction likely initiates the recruitment of replication complexes to lipid droplets. In terms of tissue distribution, highly expressed in heart and skeletal muscle.

The protein resides in the cell membrane. It localises to the endoplasmic reticulum membrane. Its subcellular location is the mitochondrion membrane. The protein localises to the lipid droplet. It catalyses the reaction a 1,2-diacyl-sn-glycero-3-phosphocholine + H2O = a 1-acyl-sn-glycero-3-phosphocholine + a fatty acid + H(+). It carries out the reaction a 1-O-alkyl-2-acyl-sn-glycero-3-phosphocholine + H2O = a 1-O-alkyl-sn-glycero-3-phosphocholine + a fatty acid + H(+). The catalysed reaction is 1,2-dihexadecanoyl-sn-glycero-3-phosphocholine + H2O = 1-hexadecanoyl-sn-glycero-3-phosphocholine + hexadecanoate + H(+). The enzyme catalyses 1-hexadecanoyl-2-(9Z-octadecenoyl)-sn-glycero-3-phosphocholine + H2O = 1-hexadecanoyl-sn-glycero-3-phosphocholine + (9Z)-octadecenoate + H(+). It catalyses the reaction 1-hexadecanoyl-2-(9Z,12Z-octadecadienoyl)-sn-glycero-3-phosphocholine + H2O = (9Z,12Z)-octadecadienoate + 1-hexadecanoyl-sn-glycero-3-phosphocholine + H(+). It carries out the reaction 1-hexadecanoyl-2-(5Z,8Z,11Z,14Z-eicosatetraenoyl)-sn-glycero-3-phosphocholine + H2O = 1-hexadecanoyl-sn-glycero-3-phosphocholine + (5Z,8Z,11Z,14Z)-eicosatetraenoate + H(+). The catalysed reaction is 1-O-hexadecyl-2-(5Z,8Z,11Z,14Z)-eicosatetraenoyl-sn-glycero-3-phosphocholine + H2O = 1-O-hexadecyl-sn-glycero-3-phosphocholine + (5Z,8Z,11Z,14Z)-eicosatetraenoate + H(+). The enzyme catalyses 1-hexadecanoyl-2-(5Z,8Z,11Z,14Z-eicosatetraenoyl)-sn-glycero-3-phosphocholine + H2O = 2-(5Z,8Z,11Z,14Z)-eicosatetraenoyl-sn-glycero-3-phosphocholine + hexadecanoate + H(+). It catalyses the reaction a 1-acyl-sn-glycero-3-phosphocholine + H2O = sn-glycerol 3-phosphocholine + a fatty acid + H(+). It carries out the reaction 1-hexadecanoyl-sn-glycero-3-phosphocholine + H2O = sn-glycerol 3-phosphocholine + hexadecanoate + H(+). The catalysed reaction is 2 1-hexadecanoyl-sn-glycero-3-phosphocholine = 1,2-dihexadecanoyl-sn-glycero-3-phosphocholine + sn-glycerol 3-phosphocholine. The enzyme catalyses 1-hexadecanoyl-sn-glycero-3-phosphoethanolamine + 1-hexadecanoyl-sn-glycero-3-phosphocholine = 1,2-dihexadecanoyl-sn-glycero-3-phosphoethanolamine + sn-glycerol 3-phosphocholine. It catalyses the reaction 1-hexadecanoyl-sn-glycero-3-phosphoethanolamine + 1-hexadecanoyl-sn-glycero-3-phosphocholine = sn-glycero-3-phosphoethanolamine + 1,2-dihexadecanoyl-sn-glycero-3-phosphocholine. It carries out the reaction 2 1-hexadecanoyl-sn-glycero-3-phosphoethanolamine = 1,2-dihexadecanoyl-sn-glycero-3-phosphoethanolamine + sn-glycero-3-phosphoethanolamine. The catalysed reaction is 1-O-hexadecyl-sn-glycero-3-phosphocholine + 1-hexadecanoyl-sn-glycero-3-phosphocholine = 1-O-hexadecyl-2-hexadecanoyl-sn-glycero-3-phosphocholine + sn-glycerol 3-phosphocholine. The enzyme catalyses a 1-O-(1Z-alkenyl)-sn-glycero-3-phosphoethanolamine + 1-hexadecanoyl-sn-glycero-3-phosphocholine = 1-O-(1Z)-alkenyl-2-hexadecanoyl-sn-glycero-3-phosphoethanolamine + sn-glycerol 3-phosphocholine. It catalyses the reaction 1-O-hexadecyl-sn-glycero-3-phosphocholine + 1-hexadecanoyl-sn-glycero-3-phosphoethanolamine = 1-O-hexadecyl-2-hexadecanoyl-sn-glycero-3-phosphocholine + sn-glycero-3-phosphoethanolamine. It carries out the reaction 1-octadecanoyl-2-(5Z,8Z,11Z,14Z)-eicosatetraenoyl-sn-glycero-3-phosphoethanolamine + 1-hexadecanoyl-sn-glycero-3-phosphocholine = 1-octadecanoyl-sn-glycero-3-phosphoethanolamine + 1-hexadecanoyl-2-(5Z,8Z,11Z,14Z-eicosatetraenoyl)-sn-glycero-3-phosphocholine. The catalysed reaction is 1-octadecanoyl-2-(5Z,8Z,11Z,14Z)-eicosatetraenoyl-sn-glycero-3-phosphoethanolamine + 1-O-hexadecyl-sn-glycero-3-phosphocholine = 1-octadecanoyl-sn-glycero-3-phosphoethanolamine + 1-O-hexadecyl-2-(5Z,8Z,11Z,14Z)-eicosatetraenoyl-sn-glycero-3-phosphocholine. The enzyme catalyses 1-hexadecanoyl-2-(9Z,12Z-octadecadienoyl)-sn-glycero-3-phosphocholine + a 1-O-(1Z-alkenyl)-sn-glycero-3-phosphoethanolamine = 1-O-(1Z-alkenyl)-2-(9Z,12Z-octadecadienoyl)-sn-glycero-3-phosphoethanolamine + 1-hexadecanoyl-sn-glycero-3-phosphocholine. It catalyses the reaction 1-hexadecanoyl-2-(5Z,8Z,11Z,14Z-eicosatetraenoyl)-sn-glycero-3-phosphocholine + a 1-O-(1Z-alkenyl)-sn-glycero-3-phosphoethanolamine = 1-O-(1Z)-alkenyl-2-(5Z,8Z,11Z,14Z)-eicosatetraenoyl-sn-glycero-3-phosphoethanolamine + 1-hexadecanoyl-sn-glycero-3-phosphocholine. With respect to regulation, not regulated by calcium, coenzyme A or ATP. Lysophospholipase activity is inhibited by palmitoyl-CoA. Lysophospholipase and O-acyltransferase activities are inhibited by methylarachidonoylfluorophosphonate. Lysophospholipase activity is inhibited by phosphatidate or lysophosphatidate. O-acyltransferase activity is up-regulated at low concentration (10-20 uM) of phosphatidate or lysophosphatidate, but inhibited at higher concentrations. Calcium-independent phospholipase, lysophospholipase and O-acyltransferase involved in phospholipid remodeling with implications in endoplasmic reticulum membrane homeostasis and lipid droplet biogenesis. Preferentially hydrolyzes the ester bond of the fatty acyl group attached at the sn-2 position of phospholipids with choline and ethanolamine head groups, producing lysophospholipids that are used in deacylation-reacylation cycles. Transfers the sn-1 fatty acyl from one lysophospholipid molecule to the sn-2 position of another lysophospholipid to form diacyl, alkylacyl and alkenylacyl glycerophospholipids. Cleaves ester bonds but not alkyl or alkenyl ether bonds at sn-1 position of lysophospholipids. Catalyzes sn-2 fatty acyl transfer from phospholipids to the sn-2 position of 1-O-alkyl or 1-O-alkenyl lysophospholipids with lower efficiency. In response to dietary fatty acids, may play a role in the formation of nascent lipid droplets from the endoplasmic reticulum likely by regulating the phospholipid composition of these organelles. In terms of biological role, (Microbial infection) May play a role in replication and assembly of human hepatitis C virus (HCV). In response to HCV infection, promotes remodeling of host endoplasmic reticulum membranes to form organelle-like structures called membranous web, where HCV replication occur. Can further mediate translocation of replication complexes to lipid droplets to enable virion assembly. Functionally, (Microbial infection) May facilitate human T-lymphotropic virus type 1 (HTLV-1) infection by promoting leukotriene B4 (LTB4) biosynthesis. LTB4 acts as a chemoattractant for HTLV-1-infected CD4-positive T cells and favors cell to cell viral transmission. In Homo sapiens (Human), this protein is Cytosolic phospholipase A2 gamma (PLA2G4C).